The chain runs to 400 residues: MSERVILAYSGGLDTSVAISWIGKETGREVVAVAIDLGQGGEDMDVVRQRALDCGAVEAVVVDARDEFAENYCLPAIQSNALYMDRYPLVSALSRPLIVKHLVDAAREHKGGIVAHGCTGKGNDQVRFEVGFASLAPDLEVLAPVRDYAWTREKAIAFAEENAIPINVTKRSPFSIDQNVWGRAVETGFLEHLWNAPTKDVYDYTEDPTLNWSTPDEVIVGFDKGVPVSVDGRDVTVLQAIEELNRRAGAQGVGRLDVVEDRLVGIKSREIYEAPGAMVLITAHTELEHVTLERELGRFKRTTDQKWGELVYDGLWFSPLKTALESFVAKTQEHVSGEIRLVLHGGHIAVNGRRSQESLYDFNLATYDEGDTFDQSSAKGFVHVHGLSSSISARRDLGIK.

8–16 (AYSGGLDTS) is an ATP binding site. Y87 contributes to the L-citrulline binding site. G117 contacts ATP. 3 residues coordinate L-aspartate: T119, N123, and D124. N123 contacts L-citrulline. Residues R127, S175, E260, and Y272 each contribute to the L-citrulline site.

Belongs to the argininosuccinate synthase family. Type 1 subfamily. As to quaternary structure, homotetramer.

The protein resides in the cytoplasm. The catalysed reaction is L-citrulline + L-aspartate + ATP = 2-(N(omega)-L-arginino)succinate + AMP + diphosphate + H(+). It participates in amino-acid biosynthesis; L-arginine biosynthesis; L-arginine from L-ornithine and carbamoyl phosphate: step 2/3. This is Argininosuccinate synthase from Mycobacterium sp. (strain JLS).